The sequence spans 142 residues: Large ribosomal subunit protein bL17 (142 aa).

This sequence belongs to the bacterial ribosomal protein bL17 family. In terms of assembly, part of the 50S ribosomal subunit. Contacts protein L32.

The sequence is that of Large ribosomal subunit protein bL17 from Wolbachia pipientis wMel.